The chain runs to 85 residues: Large ribosomal subunit protein bL27 (85 aa).

Residues 1 to 23 (MAHKKAGGSSRNGRDSESKRLGV) are disordered.

This sequence belongs to the bacterial ribosomal protein bL27 family.

The polypeptide is Large ribosomal subunit protein bL27 (Nitrosococcus oceani (strain ATCC 19707 / BCRC 17464 / JCM 30415 / NCIMB 11848 / C-107)).